We begin with the raw amino-acid sequence, 47 residues long: Defensin Tk-AMP-D1.1 (47 aa).

Cystine bridges form between C3–C47, C14–C34, C20–C41, and C24–C43.

Functionally, plant defense peptide. The protein is Defensin Tk-AMP-D1.1 of Triticum kiharae (Wheat).